Here is a 545-residue protein sequence, read N- to C-terminus: Vicilin Pis v 3.0101 (545 aa).

An N-terminal signal peptide occupies residues 1 to 25 (MGSRTKFCLTLFLVSVLILCAGLAL). Disordered stretches follow at residues 62-93 (KEKK…HEPG) and 129-154 (REHS…DENP). Basic and acidic residues predominate over residues 82–93 (GRGDEFSTHEPG). Residues 136–153 (DEEEEEEGDEEQEEEDEN) show a composition bias toward acidic residues. In terms of domain architecture, Cupin type-1 2 spans 354–517 (TFNLFKKDPS…LAFKTKGEEV (164 aa)).

The protein belongs to the 7S seed storage protein family. As to expression, expressed in seed.

In terms of biological role, seed storage protein. The polypeptide is Vicilin Pis v 3.0101 (Pistacia vera (Pistachio)).